We begin with the raw amino-acid sequence, 562 residues long: NAD-dependent malic enzyme (562 aa).

The Proton donor role is filled by tyrosine 101. An NAD(+)-binding site is contributed by arginine 154. Lysine 172 functions as the Proton acceptor in the catalytic mechanism. A divalent metal cation-binding residues include glutamate 243, aspartate 244, and aspartate 267. The NAD(+) site is built by aspartate 267 and asparagine 415.

Belongs to the malic enzymes family. In terms of assembly, homotetramer. It depends on Mg(2+) as a cofactor. Mn(2+) is required as a cofactor.

The enzyme catalyses (S)-malate + NAD(+) = pyruvate + CO2 + NADH. It catalyses the reaction oxaloacetate + H(+) = pyruvate + CO2. This is NAD-dependent malic enzyme from Colwellia psychrerythraea (strain 34H / ATCC BAA-681) (Vibrio psychroerythus).